The following is a 566-amino-acid chain: Probable cytochrome P450 519D1 (566 aa).

A helical transmembrane segment spans residues 1–21 (MNVFVLTFFICIIYLLFDLIK). A disordered region spans residues 471 to 491 (FNNNNNNNNNNNNNNSNNKHK). A compositionally biased stretch (low complexity) spans 472 to 487 (NNNNNNNNNNNNNNSN). A heme-binding site is contributed by Cys510.

It belongs to the cytochrome P450 family. It depends on heme as a cofactor.

Its subcellular location is the membrane. This chain is Probable cytochrome P450 519D1 (cyp519D1), found in Dictyostelium discoideum (Social amoeba).